Consider the following 445-residue polypeptide: Phosphoglucosamine mutase (445 aa).

The active-site Phosphoserine intermediate is the Ser102. Residues Ser102, Asp241, Asp243, and Asp245 each coordinate Mg(2+). The residue at position 102 (Ser102) is a Phosphoserine.

This sequence belongs to the phosphohexose mutase family. It depends on Mg(2+) as a cofactor. In terms of processing, activated by phosphorylation.

The enzyme catalyses alpha-D-glucosamine 1-phosphate = D-glucosamine 6-phosphate. Its function is as follows. Catalyzes the conversion of glucosamine-6-phosphate to glucosamine-1-phosphate. This Shigella dysenteriae serotype 1 (strain Sd197) protein is Phosphoglucosamine mutase.